Here is a 443-residue protein sequence, read N- to C-terminus: Probable glycine dehydrogenase (decarboxylating) subunit 1 (443 aa).

Belongs to the GcvP family. N-terminal subunit subfamily. In terms of assembly, the glycine cleavage system is composed of four proteins: P, T, L and H. In this organism, the P 'protein' is a heterodimer of two subunits.

It carries out the reaction N(6)-[(R)-lipoyl]-L-lysyl-[glycine-cleavage complex H protein] + glycine + H(+) = N(6)-[(R)-S(8)-aminomethyldihydrolipoyl]-L-lysyl-[glycine-cleavage complex H protein] + CO2. In terms of biological role, the glycine cleavage system catalyzes the degradation of glycine. The P protein binds the alpha-amino group of glycine through its pyridoxal phosphate cofactor; CO(2) is released and the remaining methylamine moiety is then transferred to the lipoamide cofactor of the H protein. The polypeptide is Probable glycine dehydrogenase (decarboxylating) subunit 1 (Desulfovibrio desulfuricans (strain ATCC 27774 / DSM 6949 / MB)).